We begin with the raw amino-acid sequence, 257 residues long: Hydroxyacylglutathione hydrolase (257 aa).

Residues His-54, His-56, Asp-58, His-59, His-113, Asp-137, and His-175 each contribute to the Zn(2+) site.

The protein belongs to the metallo-beta-lactamase superfamily. Glyoxalase II family. Monomer. Zn(2+) serves as cofactor.

The enzyme catalyses an S-(2-hydroxyacyl)glutathione + H2O = a 2-hydroxy carboxylate + glutathione + H(+). It functions in the pathway secondary metabolite metabolism; methylglyoxal degradation; (R)-lactate from methylglyoxal: step 2/2. Its function is as follows. Thiolesterase that catalyzes the hydrolysis of S-D-lactoyl-glutathione to form glutathione and D-lactic acid. This chain is Hydroxyacylglutathione hydrolase, found in Gloeothece citriformis (strain PCC 7424) (Cyanothece sp. (strain PCC 7424)).